The chain runs to 529 residues: Peptide chain release factor 3 (529 aa).

The tr-type G domain occupies 11 to 280 (NSRRTFAIIS…AFINWAPEPK (270 aa)). Residues 20–27 (SHPDAGKT), 88–92 (DTPGH), and 142–145 (NKMD) contribute to the GTP site.

This sequence belongs to the TRAFAC class translation factor GTPase superfamily. Classic translation factor GTPase family. PrfC subfamily.

The protein resides in the cytoplasm. Increases the formation of ribosomal termination complexes and stimulates activities of RF-1 and RF-2. It binds guanine nucleotides and has strong preference for UGA stop codons. It may interact directly with the ribosome. The stimulation of RF-1 and RF-2 is significantly reduced by GTP and GDP, but not by GMP. The chain is Peptide chain release factor 3 from Acinetobacter baylyi (strain ATCC 33305 / BD413 / ADP1).